A 584-amino-acid polypeptide reads, in one-letter code: DNA ligase (584 aa).

ATP is bound at residue Glu-249. Residue Lys-251 is the N6-AMP-lysine intermediate of the active site. ATP-binding residues include Arg-256, Arg-271, Glu-301, Phe-341, Arg-416, and Lys-422.

The protein belongs to the ATP-dependent DNA ligase family. Mg(2+) serves as cofactor.

The enzyme catalyses ATP + (deoxyribonucleotide)n-3'-hydroxyl + 5'-phospho-(deoxyribonucleotide)m = (deoxyribonucleotide)n+m + AMP + diphosphate.. DNA ligase that seals nicks in double-stranded DNA during DNA replication, DNA recombination and DNA repair. This is DNA ligase from Pyrobaculum neutrophilum (strain DSM 2338 / JCM 9278 / NBRC 100436 / V24Sta) (Thermoproteus neutrophilus).